The primary structure comprises 722 residues: Bifunctional UDP-N-acetylglucosamine 2-epimerase/N-acetylmannosamine kinase (722 aa).

Positions 19, 23, 113, 220, and 253 each coordinate UDP. CMP-N-acetyl-beta-neuraminate-binding residues include Lys259, Glu271, Lys280, and His281. Positions 282, 301, 302, 307, and 321 each coordinate UDP. Residues 406-722 (TLSALAVDLG…VLDYTTRRIH (317 aa)) form an N-acetylmannosamine kinase region. Asp413 lines the Mg(2+) pocket. Position 416 (Gly416) interacts with an N-acyl-D-mannosamine 6-phosphate. ADP contacts are provided by Thr417, Asn418, and Arg420. An N-acyl-D-mannosamine 6-phosphate contacts are provided by Gly476, Arg477, Thr489, Asn516, Asp517, and Gly545. 5 residues coordinate an N-acyl-D-mannosamine: Gly476, Arg477, Thr489, Asn516, and Asp517. Asp517 is a catalytic residue. Positions 566 and 569 each coordinate an N-acyl-D-mannosamine. Residue His569 coordinates an N-acyl-D-mannosamine 6-phosphate. Zn(2+) contacts are provided by His569, Cys579, Cys581, and Cys586. Residue Glu588 participates in an N-acyl-D-mannosamine 6-phosphate binding. Residue Glu588 participates in an N-acyl-D-mannosamine binding.

It in the N-terminal section; belongs to the UDP-N-acetylglucosamine 2-epimerase family. In the C-terminal section; belongs to the ROK (NagC/XylR) family. In terms of assembly, homodimer. Homotetramer. Homohexamer. The hexameric form exhibits both enzyme activities, whereas the dimeric form only catalyzes the phosphorylation of N-acyl-D-mannosamine. Phosphorylated. Phosphorylation by PKC activates the UDP-N-acetylglucosamine 2-epimerase activity. In terms of tissue distribution, widely expressed. Highest expression in liver. Also found at high levels in lung, brain and kidney.

Its subcellular location is the cytoplasm. The protein resides in the cytosol. It carries out the reaction UDP-N-acetyl-alpha-D-glucosamine + H2O = aldehydo-N-acetyl-D-mannosamine + UDP + H(+). It catalyses the reaction an N-acyl-D-mannosamine + ATP = an N-acyl-D-mannosamine 6-phosphate + ADP + H(+). Its pathway is amino-sugar metabolism; N-acetylneuraminate biosynthesis. The UDP-N-acetylglucosamine 2-epimerase activity, in contrast to the N-acetylmannosamine kinase activity, exhibits allosteric regulation by cytidine monophosphate-N-acetylneuraminic acid (CMP-Neu5Ac), the end product of neuraminic acid biosynthesis. Moreover, the activity is contingent upon the oligomeric state of the enzyme. The monomeric form is inactive, while the dimeric form selectively catalyzes the phosphorylation of N-acetylmannosamine. The hexameric form, on the other hand, demonstrates full proficiency in both enzyme activities. Furthermore, the UDP-N-acetylglucosamine 2-epimerase activity is increased by PKC-mediated phosphorylation. Bifunctional enzyme that possesses both UDP-N-acetylglucosamine 2-epimerase and N-acetylmannosamine kinase activities, and serves as the initiator of the biosynthetic pathway leading to the production of N-acetylneuraminic acid (NeuAc), a critical precursor in the synthesis of sialic acids. By catalyzing this pivotal and rate-limiting step in sialic acid biosynthesis, this enzyme assumes a pivotal role in governing the regulation of cell surface sialylation, playing a role in embryonic angiogenesis. Sialic acids represent a category of negatively charged sugars that reside on the surface of cells as terminal components of glycoconjugates and mediate important functions in various cellular processes, including cell adhesion, signal transduction, and cellular recognition. This chain is Bifunctional UDP-N-acetylglucosamine 2-epimerase/N-acetylmannosamine kinase, found in Mus musculus (Mouse).